Here is a 514-residue protein sequence, read N- to C-terminus: Ankyrin repeat domain-containing protein 34B (514 aa).

ANK repeat units lie at residues 9–38, 42–79, 83–113, and 117–146; these read SEGNSLIKAVHQSRLRLTRLLLEGGAYINE, RGETPLMIACKTKHVDHQSVSKAKMVKYLLENNADPNI, SGKTALMHACLEKAGPEVVSLLLKSGADLSL, and SSYSALVYAINSEDTETLKVLLSACKAKGK. The interval 220 to 249 is disordered; sequence NDDTWDPGSPVRKPALAPKGPKLPHAPPWV. S263 is subject to Phosphoserine. At T272 the chain carries Phosphothreonine. At S296 the chain carries Phosphoserine.

Belongs to the ANKRD34 family. Post-translationally, phosphorylated.

It localises to the cytoplasm. It is found in the nucleus. This is Ankyrin repeat domain-containing protein 34B (ANKRD34B) from Homo sapiens (Human).